The chain runs to 625 residues: 1-deoxy-D-xylulose-5-phosphate synthase (625 aa).

Thiamine diphosphate-binding positions include His-80 and 121–123 (GHS). Residue Asp-152 participates in Mg(2+) binding. Thiamine diphosphate is bound by residues 153 to 154 (GS), Asn-181, Tyr-290, and Glu-371. Asn-181 contributes to the Mg(2+) binding site.

It belongs to the transketolase family. DXPS subfamily. Homodimer. The cofactor is Mg(2+). Requires thiamine diphosphate as cofactor.

It carries out the reaction D-glyceraldehyde 3-phosphate + pyruvate + H(+) = 1-deoxy-D-xylulose 5-phosphate + CO2. The protein operates within metabolic intermediate biosynthesis; 1-deoxy-D-xylulose 5-phosphate biosynthesis; 1-deoxy-D-xylulose 5-phosphate from D-glyceraldehyde 3-phosphate and pyruvate: step 1/1. Functionally, catalyzes the acyloin condensation reaction between C atoms 2 and 3 of pyruvate and glyceraldehyde 3-phosphate to yield 1-deoxy-D-xylulose-5-phosphate (DXP). This chain is 1-deoxy-D-xylulose-5-phosphate synthase, found in Haemophilus influenzae (strain PittGG).